Reading from the N-terminus, the 184-residue chain is Adenine phosphoribosyltransferase (184 aa).

The protein belongs to the purine/pyrimidine phosphoribosyltransferase family. Homodimer.

The protein resides in the cytoplasm. It carries out the reaction AMP + diphosphate = 5-phospho-alpha-D-ribose 1-diphosphate + adenine. It functions in the pathway purine metabolism; AMP biosynthesis via salvage pathway; AMP from adenine: step 1/1. Catalyzes a salvage reaction resulting in the formation of AMP, that is energically less costly than de novo synthesis. The sequence is that of Adenine phosphoribosyltransferase from Acidovorax sp. (strain JS42).